A 179-amino-acid polypeptide reads, in one-letter code: Adenine phosphoribosyltransferase (179 aa).

It belongs to the purine/pyrimidine phosphoribosyltransferase family. As to quaternary structure, homodimer.

It is found in the cytoplasm. The catalysed reaction is AMP + diphosphate = 5-phospho-alpha-D-ribose 1-diphosphate + adenine. The protein operates within purine metabolism; AMP biosynthesis via salvage pathway; AMP from adenine: step 1/1. Functionally, catalyzes a salvage reaction resulting in the formation of AMP, that is energically less costly than de novo synthesis. The polypeptide is Adenine phosphoribosyltransferase (Mycolicibacterium gilvum (strain PYR-GCK) (Mycobacterium gilvum (strain PYR-GCK))).